Reading from the N-terminus, the 244-residue chain is Venom nerve growth factor 3 (244 aa).

An N-terminal signal peptide occupies residues 1–18 (MSMLCYTLIIAFLIGIWA). The propeptide occupies 19-125 (APKSEDNVPL…TLNRNIRAKR (107 aa)). Basic and acidic residues predominate over residues 47 to 66 (GLKTSRNTDQRHPAPKKAED). Residues 47–67 (GLKTSRNTDQRHPAPKKAEDQ) are disordered. 3 disulfides stabilise this stretch: Cys-139–Cys-205, Cys-181–Cys-233, and Cys-193–Cys-235.

This sequence belongs to the NGF-beta family. Homodimer; non-covalently linked. In terms of tissue distribution, expressed by the venom gland.

It is found in the secreted. Nerve growth factor is important for the development and maintenance of the sympathetic and sensory nervous systems. It stimulates division and differentiation of sympathetic and embryonic sensory neurons as well as basal forebrain cholinergic neurons in the brain. Its relevance in the snake venom is not clear. However, it has been shown to inhibit metalloproteinase-dependent proteolysis of platelet glycoprotein Ib alpha, suggesting a metalloproteinase inhibition to prevent metalloprotease autodigestion and/or protection against prey proteases. Binds a lipid between the two protein chains in the homodimer. The lipid-bound form promotes histamine relase from mouse mast cells, contrary to the lipid-free form. The protein is Venom nerve growth factor 3 of Notechis scutatus scutatus (Mainland tiger snake).